Here is a 267-residue protein sequence, read N- to C-terminus: 3-methyl-2-oxobutanoate hydroxymethyltransferase (267 aa).

Mg(2+)-binding residues include aspartate 46 and aspartate 85. 3-methyl-2-oxobutanoate-binding positions include 46-47 (DS), aspartate 85, and lysine 115. Glutamate 117 is a binding site for Mg(2+). Catalysis depends on glutamate 184, which acts as the Proton acceptor.

This sequence belongs to the PanB family. In terms of assembly, homodecamer; pentamer of dimers. Mg(2+) is required as a cofactor.

Its subcellular location is the cytoplasm. The catalysed reaction is 3-methyl-2-oxobutanoate + (6R)-5,10-methylene-5,6,7,8-tetrahydrofolate + H2O = 2-dehydropantoate + (6S)-5,6,7,8-tetrahydrofolate. It functions in the pathway cofactor biosynthesis; (R)-pantothenate biosynthesis; (R)-pantoate from 3-methyl-2-oxobutanoate: step 1/2. Functionally, catalyzes the reversible reaction in which hydroxymethyl group from 5,10-methylenetetrahydrofolate is transferred onto alpha-ketoisovalerate to form ketopantoate. The polypeptide is 3-methyl-2-oxobutanoate hydroxymethyltransferase (Geotalea daltonii (strain DSM 22248 / JCM 15807 / FRC-32) (Geobacter daltonii)).